The sequence spans 396 residues: Elongation factor Tu (396 aa).

The tr-type G domain occupies 10 to 206 (KPHVNVGTIG…ALDASIPEPK (197 aa)). Residues 19 to 26 (GHVDHGKT) form a G1 region. 19 to 26 (GHVDHGKT) is a GTP binding site. Mg(2+) is bound at residue threonine 26. A G2 region spans residues 60 to 64 (GITIS). The tract at residues 81–84 (DCPG) is G3. Residues 81–85 (DCPGH) and 136–139 (NKAD) each bind GTP. Residues 136–139 (NKAD) form a G4 region. The interval 174–176 (SAL) is G5.

This sequence belongs to the TRAFAC class translation factor GTPase superfamily. Classic translation factor GTPase family. EF-Tu/EF-1A subfamily. In terms of assembly, monomer.

It is found in the cytoplasm. The enzyme catalyses GTP + H2O = GDP + phosphate + H(+). In terms of biological role, GTP hydrolase that promotes the GTP-dependent binding of aminoacyl-tRNA to the A-site of ribosomes during protein biosynthesis. The polypeptide is Elongation factor Tu (Dichelobacter nodosus (strain VCS1703A)).